Consider the following 1514-residue polypeptide: ABC transporter C family member 5 (1514 aa).

10 helical membrane passes run 16–36 (LLELCSVIINLLLFLVFLFAV), 76–96 (FGFNLSLLCCLYVLGVQVLVL), 111–131 (FVLCFPASQSLAWFVLSFLVL), 142–162 (PFLVRIWWFLAFSICLCTMYV), 177–197 (SHVVANLAVTPALGFLCFLAW), 312–332 (VFAGLNTLVSYVGPYLISYFV), 334–354 (YLGGKEIFPHEGYVLAGIFFT), 421–441 (WYLHDIWMLPMQIVLALAILY), 446–466 (IAAVATLVATIISILVTIPLA), and 533–553 (FIFWSSPIFVAAVTFATSIFL). Residues 307-588 (AACNAVFAGL…FPDLVSMMAQ (282 aa)) enclose the ABC transmembrane type-1 1 domain. Residues 622 to 845 (IEIKDGVFCW…GTDFKALVSA (224 aa)) enclose the ABC transporter 1 domain. An ATP-binding site is contributed by 657–664 (GTVGSGKS). The stretch at 899–927 (ASDLKAIKEKKKKAKRSRKKQLVQEEERV) forms a coiled coil. 6 consecutive transmembrane segments (helical) span residues 946–966 (GALIPLIILAQAAFQFLQIAS), 986–1006 (PTLLLIVYTALAFGSSVFIFV), 1078–1098 (IVAVMTNVTWQVFLLVVPVAV), 1117–1137 (IVSIQKSPIIHLFGESIAGAA), 1155–1175 (LLDCFVRPFFCSIAAIEWLCL), and 1180–1200 (LSTLVFAFCMVLLVSFPHGTI). An ABC transmembrane type-1 2 domain is found at 949–1231 (IPLIILAQAA…WILSFCKLEN (283 aa)). Residues 1268–1502 (IELVDVKVRY…KSSMFLKLVT (235 aa)) enclose the ABC transporter 2 domain. Residue 1302-1309 (GRTGSGKS) coordinates ATP.

This sequence belongs to the ABC transporter superfamily. ABCC family. Conjugate transporter (TC 3.A.1.208) subfamily. In terms of tissue distribution, ubiquitous, mostly in vascular tissues and epidermis, including guard cells.

It is found in the membrane. The catalysed reaction is ATP + H2O + xenobioticSide 1 = ADP + phosphate + xenobioticSide 2.. With respect to regulation, (E(2)17G) transport activity in negatively regulated by organic anions such as oestradiol-3-sulfate, luteolin-7-O-diglucuronide-4'-O-glucuronide, glycocholate, vanadate and the sulfonylurea glibenclamide, and, to a lower extent, by bafilomycin A1, NH(4)Cl, GSH, GSSG and DNB-GS. Functionally, pump for glutathione S-conjugates. Involved in regulation of K(+) and Na(+) cell content. Mediates resistance to NaCl and Li(+), confers sensitivity to sulfonylurea drugs such as glibenclamide (inducer of stomatal opening), and required for stomatal opening regulation by auxin, abscisic acid (ABA) and external Ca(2+). Transports oestradiol-17-(beta-D-glucuronide) (E(2)17G). Involved in the root auxin content regulation that controls the transition from primary root elongation to lateral root formation. Plays a role in ABA-mediated germination inhibition. High-affinity inositol hexakisphosphate transporter that plays a role in guard cell signaling and phytic acid storage. Required for phytic acid accumulation in developing seeds. Phytic acid is the primary storage form of phosphorus in cereal grains and other plant seeds. In Arabidopsis thaliana (Mouse-ear cress), this protein is ABC transporter C family member 5 (ABCC5).